We begin with the raw amino-acid sequence, 340 residues long: MLTKRQVKILQTIVEEFIKTNQPVGSKRILELLDIKISSATIRNESAILEHEGYLEKQHTSSGRTPSTKGYRYYVDNIMKLDSADYTRLKIYLNQLLDLRKYDIDKTINYASEIISELTKMTAVVIKKQNIKNIKLKKIELILLSEFLASVLFIFSDGDVQNKMFNLKDISLSDLKIAIKLFSDFLVDVKLDEIDQYLNDLKHQLSLSIKQYDYVLNTFINTILESKNEQKETHGMRYMLENPEFNDTNKLKNAVKLVEQLSPFDWFNIAYESNKNMNKIAIKIGNEIDQINDDISMIATELKIGNSSTVLTLVGPKRVDYNQVNQLMNLIIEIINAKEN.

It belongs to the HrcA family.

Its function is as follows. Negative regulator of class I heat shock genes (grpE-dnaK-dnaJ and groELS operons). Prevents heat-shock induction of these operons. The chain is Heat-inducible transcription repressor HrcA from Mycoplasma capricolum subsp. capricolum (strain California kid / ATCC 27343 / NCTC 10154).